The primary structure comprises 336 residues: F420-dependent glucose-6-phosphate dehydrogenase (336 aa).

Asp-39 is a coenzyme F420-(gamma-Glu)n binding site. Residue His-40 is the Proton donor of the active site. Residues Thr-76 and 107-108 (TG) contribute to the coenzyme F420-(gamma-Glu)n site. Glu-109 functions as the Proton acceptor in the catalytic mechanism. Residues Asn-112, 177 to 178 (GG), and 180 to 181 (LV) contribute to the coenzyme F420-(gamma-Glu)n site. Residues Thr-195, Lys-198, Lys-259, and Arg-283 each contribute to the substrate site.

The protein belongs to the F420-dependent glucose-6-phosphate dehydrogenase family. As to quaternary structure, homodimer.

It carries out the reaction oxidized coenzyme F420-(gamma-L-Glu)(n) + D-glucose 6-phosphate + H(+) = 6-phospho-D-glucono-1,5-lactone + reduced coenzyme F420-(gamma-L-Glu)(n). Functionally, catalyzes the coenzyme F420-dependent oxidation of glucose 6-phosphate (G6P) to 6-phosphogluconolactone. The sequence is that of F420-dependent glucose-6-phosphate dehydrogenase from Nocardia farcinica (strain IFM 10152).